A 406-amino-acid chain; its full sequence is Heparan sulfate glucosamine 3-O-sulfotransferase 3A1 (406 aa).

The Cytoplasmic segment spans residues 1–24 (MAPPGPASALSTSAEPLSRSIFRK). The helical; Signal-anchor for type II membrane protein transmembrane segment at 25 to 43 (FLLMLCSLLTSLYVFYCLA) threads the bilayer. At 44 to 406 (ERCQTLSGPV…MTGHDFGWDG (363 aa)) the chain is on the lumenal side. Residues 92–102 (QLPQWRRRRPP) are compositionally biased toward basic residues. A disordered region spans residues 92–134 (QLPQWRRRRPPAPRDDGEEAAWEEESPGLSGGPGGSGAGSTVA). Over residues 107–117 (DGEEAAWEEES) the composition is skewed to acidic residues. Residues 120–129 (LSGGPGGSGA) are compositionally biased toward gly residues. 3'-phosphoadenylyl sulfate is bound at residue 162–166 (KGGTR). Residues R166, 184–190 (EPHFFDR), and 215–218 (KTPS) contribute to the substrate site. Positions 243 and 251 each coordinate 3'-phosphoadenylyl sulfate. Position 255-259 (255-259 (QTLSK)) interacts with substrate. A glycan (N-linked (GlcNAc...) asparagine) is linked at N273. 283-284 (WS) contributes to the substrate binding site. N344 carries N-linked (GlcNAc...) asparagine glycosylation. C351 and C363 are disulfide-bonded. 367 to 370 (TKGR) is a substrate binding site. 368 to 372 (KGRTH) is a 3'-phosphoadenylyl sulfate binding site.

This sequence belongs to the sulfotransferase 1 family. As to expression, ubiquitous. Most abundant in heart and placenta, followed by liver and kidney.

It localises to the golgi apparatus membrane. The enzyme catalyses alpha-D-glucosaminyl-[heparan sulfate](n) + 3'-phosphoadenylyl sulfate = 3-sulfo-alpha-D-glucosaminyl-[heparan sulfate](n) + adenosine 3',5'-bisphosphate + H(+). In terms of biological role, sulfotransferase that utilizes 3'-phospho-5'-adenylyl sulfate (PAPS) to catalyze the transfer of a sulfo group to an N-unsubstituted glucosamine linked to a 2-O-sulfo iduronic acid unit on heparan sulfate. Catalyzes the O-sulfation of glucosamine in IdoUA2S-GlcNS and also in IdoUA2S-GlcNH2. The substrate-specific O-sulfation generates an enzyme-modified heparan sulfate which acts as a binding receptor to Herpes simplex virus-1 (HSV-1) and permits its entry. Unlike HS3ST1/3-OST-1, does not convert non-anticoagulant heparan sulfate to anticoagulant heparan sulfate. The chain is Heparan sulfate glucosamine 3-O-sulfotransferase 3A1 (HS3ST3A1) from Homo sapiens (Human).